Reading from the N-terminus, the 151-residue chain is Ribosomal RNA large subunit methyltransferase H (151 aa).

S-adenosyl-L-methionine is bound by residues Gly-100 and 119-124 (LSKMTF).

This sequence belongs to the RNA methyltransferase RlmH family. In terms of assembly, homodimer.

The protein localises to the cytoplasm. It carries out the reaction pseudouridine(1915) in 23S rRNA + S-adenosyl-L-methionine = N(3)-methylpseudouridine(1915) in 23S rRNA + S-adenosyl-L-homocysteine + H(+). Specifically methylates the pseudouridine at position 1915 (m3Psi1915) in 23S rRNA. The protein is Ribosomal RNA large subunit methyltransferase H of Thermotoga maritima (strain ATCC 43589 / DSM 3109 / JCM 10099 / NBRC 100826 / MSB8).